The sequence spans 200 residues: Dephospho-CoA kinase (200 aa).

The DPCK domain occupies 4–200; sequence TIGLTGSVAT…TFIERFVKNK (197 aa). 12–17 lines the ATP pocket; sequence ATGKST.

Belongs to the CoaE family.

It localises to the cytoplasm. The catalysed reaction is 3'-dephospho-CoA + ATP = ADP + CoA + H(+). Its pathway is cofactor biosynthesis; coenzyme A biosynthesis; CoA from (R)-pantothenate: step 5/5. Functionally, catalyzes the phosphorylation of the 3'-hydroxyl group of dephosphocoenzyme A to form coenzyme A. This is Dephospho-CoA kinase from Listeria monocytogenes serovar 1/2a (strain ATCC BAA-679 / EGD-e).